The primary structure comprises 1096 residues: DNA-directed RNA polymerase subunit beta (1096 aa).

It belongs to the RNA polymerase beta chain family. In terms of assembly, in plastids the minimal PEP RNA polymerase catalytic core is composed of four subunits: alpha, beta, beta', and beta''. When a (nuclear-encoded) sigma factor is associated with the core the holoenzyme is formed, which can initiate transcription.

It localises to the plastid. Its subcellular location is the chloroplast. It catalyses the reaction RNA(n) + a ribonucleoside 5'-triphosphate = RNA(n+1) + diphosphate. In terms of biological role, DNA-dependent RNA polymerase catalyzes the transcription of DNA into RNA using the four ribonucleoside triphosphates as substrates. This is DNA-directed RNA polymerase subunit beta from Guillardia theta (Cryptophyte).